The primary structure comprises 154 residues: Peptide deformylase (154 aa).

The Fe cation site is built by Cys90 and His132. Residue Glu133 is part of the active site. A Fe cation-binding site is contributed by His136.

The protein belongs to the polypeptide deformylase family. Requires Fe(2+) as cofactor.

The enzyme catalyses N-terminal N-formyl-L-methionyl-[peptide] + H2O = N-terminal L-methionyl-[peptide] + formate. Functionally, removes the formyl group from the N-terminal Met of newly synthesized proteins. Requires at least a dipeptide for an efficient rate of reaction. N-terminal L-methionine is a prerequisite for activity but the enzyme has broad specificity at other positions. This is Peptide deformylase from Halothermothrix orenii (strain H 168 / OCM 544 / DSM 9562).